Consider the following 179-residue polypeptide: RNA pyrophosphohydrolase (179 aa).

The 144-residue stretch at 6 to 149 (GYRANVGIVI…KKPIYEDMLK (144 aa)) folds into the Nudix hydrolase domain. A Nudix box motif is present at residues 38–59 (GGIDFGESELDALFRELNEEIG).

The protein belongs to the Nudix hydrolase family. RppH subfamily. Requires a divalent metal cation as cofactor.

Accelerates the degradation of transcripts by removing pyrophosphate from the 5'-end of triphosphorylated RNA, leading to a more labile monophosphorylated state that can stimulate subsequent ribonuclease cleavage. This is RNA pyrophosphohydrolase from Ruthia magnifica subsp. Calyptogena magnifica.